The sequence spans 353 residues: Glycerol-3-phosphate dehydrogenase [NAD(+)], cytoplasmic (353 aa).

Position 2 is a blocked amino end (Ala) (Ala-2). NAD(+) contacts are provided by residues 11–16, Phe-98, Lys-121, and Ala-155; that span reads GSGNWG. Substrate is bound at residue Lys-121. Lys-206 serves as the catalytic Proton acceptor. Arg-270 and Gln-299 together coordinate NAD(+). Residue 270-271 participates in substrate binding; that stretch reads RN.

This sequence belongs to the NAD-dependent glycerol-3-phosphate dehydrogenase family. As to quaternary structure, homodimer.

It localises to the cytoplasm. It catalyses the reaction sn-glycerol 3-phosphate + NAD(+) = dihydroxyacetone phosphate + NADH + H(+). It functions in the pathway phospholipid metabolism; alpha-glycerophosphate cycle. The polypeptide is Glycerol-3-phosphate dehydrogenase [NAD(+)], cytoplasmic (Drosophila virilis (Fruit fly)).